The chain runs to 151 residues: Transcriptional regulator MraZ (151 aa).

SpoVT-AbrB domains are found at residues 5–52 (ANAI…PLSE) and 81–124 (AVDL…DEDA).

The protein belongs to the MraZ family. In terms of assembly, forms oligomers.

The protein resides in the cytoplasm. The protein localises to the nucleoid. The chain is Transcriptional regulator MraZ from Pseudomonas savastanoi pv. phaseolicola (strain 1448A / Race 6) (Pseudomonas syringae pv. phaseolicola (strain 1448A / Race 6)).